An 83-amino-acid polypeptide reads, in one-letter code: MKGLILFICGFMMIGVILAKEGYPMDHEGCKFSCFIRPSGFCERYCKTHLSASTGYCAWPACYCYGVPANQKVWDYYNNKCGK.

An N-terminal signal peptide occupies residues Met1–Ala19. Residues Lys20–Gly82 form the LCN-type CS-alpha/beta domain. 4 cysteine pairs are disulfide-bonded: Cys30-Cys81, Cys34-Cys57, Cys42-Cys62, and Cys46-Cys64. A Cysteine amide modification is found at Cys81.

The protein belongs to the long (4 C-C) scorpion toxin superfamily. Sodium channel inhibitor family. Beta subfamily. As to expression, expressed by the venom gland.

Its subcellular location is the secreted. In terms of biological role, beta toxins bind voltage-independently at site-4 of sodium channels (Nav) and shift the voltage of activation toward more negative potentials thereby affecting sodium channel activation and promoting spontaneous and repetitive firing. The protein is Toxin To12 of Tityus obscurus (Amazonian scorpion).